The following is a 356-amino-acid chain: 3-isopropylmalate dehydrogenase (356 aa).

Residues arginine 95, arginine 105, arginine 133, and aspartate 223 each coordinate substrate. Mg(2+) contacts are provided by aspartate 223, aspartate 247, and aspartate 251. 281 to 293 (GSAPDIAGQNKAN) is an NAD(+) binding site.

It belongs to the isocitrate and isopropylmalate dehydrogenases family. LeuB type 1 subfamily. In terms of assembly, homodimer. Requires Mg(2+) as cofactor. Mn(2+) serves as cofactor.

The protein localises to the cytoplasm. The enzyme catalyses (2R,3S)-3-isopropylmalate + NAD(+) = 4-methyl-2-oxopentanoate + CO2 + NADH. Its pathway is amino-acid biosynthesis; L-leucine biosynthesis; L-leucine from 3-methyl-2-oxobutanoate: step 3/4. In terms of biological role, catalyzes the oxidation of 3-carboxy-2-hydroxy-4-methylpentanoate (3-isopropylmalate) to 3-carboxy-4-methyl-2-oxopentanoate. The product decarboxylates to 4-methyl-2 oxopentanoate. The protein is 3-isopropylmalate dehydrogenase of Neisseria gonorrhoeae (strain ATCC 700825 / FA 1090).